We begin with the raw amino-acid sequence, 144 residues long: Large ribosomal subunit protein uL15 (144 aa).

Positions 1 to 57 are disordered; it reads MLLNTLSPAAGSKHAPKRLGRGVGSGLGKTGGRGHKGQKSRSGGKVRPGFEGGQMPL. Gly residues predominate over residues 21-31; that stretch reads RGVGSGLGKTG. A compositionally biased stretch (basic residues) spans 32–44; sequence GRGHKGQKSRSGG.

The protein belongs to the universal ribosomal protein uL15 family. In terms of assembly, part of the 50S ribosomal subunit.

Its function is as follows. Binds to the 23S rRNA. In Vibrio cholerae serotype O1 (strain ATCC 39315 / El Tor Inaba N16961), this protein is Large ribosomal subunit protein uL15.